A 229-amino-acid polypeptide reads, in one-letter code: Probable calcium-binding protein CML22 (229 aa).

EF-hand domains lie at Glu-53–Ser-88, Leu-89–Leu-124, Ser-145–Pro-180, and Ser-184–Leu-219. Ca(2+) contacts are provided by Asp-66, Asp-68, Asn-70, Thr-72, and Glu-77.

Potential calcium sensor. The protein is Probable calcium-binding protein CML22 (CML22) of Arabidopsis thaliana (Mouse-ear cress).